The primary structure comprises 335 residues: HTH-type transcriptional regulator MalR (335 aa).

Positions 1 to 55 constitute an HTH lacI-type domain; that stretch reads MNIKDIARLSGVGVSTVSRVINNHPDVKQSTREKVLQIIKDSNYIPNNSARILKQ. A DNA-binding region (H-T-H motif) is located at residues 3–22; that stretch reads IKDIARLSGVGVSTVSRVIN.

Its function is as follows. Repressor of glucanotransferase gene expression. This Clostridium butyricum protein is HTH-type transcriptional regulator MalR.